We begin with the raw amino-acid sequence, 242 residues long: tRNA pseudouridine synthase A (242 aa).

The active-site Nucleophile is D51. A substrate-binding site is contributed by Y107.

It belongs to the tRNA pseudouridine synthase TruA family. In terms of assembly, homodimer.

The enzyme catalyses uridine(38/39/40) in tRNA = pseudouridine(38/39/40) in tRNA. In terms of biological role, formation of pseudouridine at positions 38, 39 and 40 in the anticodon stem and loop of transfer RNAs. This is tRNA pseudouridine synthase A from Helicobacter pylori (strain Shi470).